Here is a 375-residue protein sequence, read N- to C-terminus: Serpin B5 (375 aa).

Residues asparagine 99, asparagine 133, asparagine 188, and asparagine 361 are each glycosylated (N-linked (GlcNAc...) asparagine).

The protein belongs to the serpin family. Ov-serpin subfamily. In terms of assembly, interacts with IRF6. Normal mammary epithelial cells.

It localises to the secreted. The protein resides in the extracellular space. Tumor suppressor. It blocks the growth, invasion, and metastatic properties of mammary tumors. As it does not undergo the S (stressed) to R (relaxed) conformational transition characteristic of active serpins, it exhibits no serine protease inhibitory activity. This chain is Serpin B5 (SERPINB5), found in Homo sapiens (Human).